Here is a 1077-residue protein sequence, read N- to C-terminus: ATP-dependent helicase/deoxyribonuclease subunit B (1077 aa).

This sequence belongs to the helicase family. AddB/RexB type 2 subfamily. In terms of assembly, heterodimer of AddA and RexB. The cofactor is Mg(2+).

Functionally, the heterodimer acts as both an ATP-dependent DNA helicase and an ATP-dependent, dual-direction single-stranded exonuclease. Recognizes the chi site generating a DNA molecule suitable for the initiation of homologous recombination. This subunit has 5' -&gt; 3' nuclease activity but not helicase activity. In Streptococcus agalactiae serotype Ia (strain ATCC 27591 / A909 / CDC SS700), this protein is ATP-dependent helicase/deoxyribonuclease subunit B.